Consider the following 67-residue polypeptide: Myrmicitoxin(1)-Pm6a (67 aa).

An N-terminal signal peptide occupies residues 1 to 25 (MRSLYLSFSLTIIFVLVIMHAEAKA). The propeptide occupies 26-37 (ISEPNAIAEADP). Position 66 is a valine amide (V66).

This sequence belongs to the formicidae venom clade 3 family. As to expression, expressed by the venom gland.

It localises to the secreted. Functionally, toxin that causes a rapid and irreversible paralysis when intrathoracically injected into insects (blowflies). Does not cause spontaneous nocifensive behaviors by intraplantar injection in mice. Exhibits hemolytic and cytotoxic activities on HEK293 cells. This chain is Myrmicitoxin(1)-Pm6a, found in Pogonomyrmex maricopa (Maricopa harvester ant).